A 1622-amino-acid chain; its full sequence is MAMQSLSPVPKLLSTTPSSVLSSDKNFFFVDFVGLYCKSKRTRRRLRGDSSSSSRSSSSLSRLSSVRAVIDLERVHGVSEKDLSSPSALRPQVANLEDILSERGACGVGFIANLDNIPSHGVVKDALIALGCMEHRGGCGADNDSGDGSGLMSSIPWDFFNVWAKEQSLAPFDKLHTGVGMIFLPQDDTFMQEAKQVIENIFEKEGLQVLGWREVPVNVPIVGKNARETMPNIQQVFVKIAKEDSTDDIERELYICRKLIERAVATESWGTELYFCSLSNQTIVYKGMLRSEALGLFYLDLQNELYESPFAIYHRRYSTNTSPRWPLAQPMRFLGHNGEINTIQGNLNWMQSREASLKAAVWNGRENEIRPFGNPRGSDSANLDSAAEIMIRSGRTPEEALMILVPEAYKNHPTLSVKYPEVVDFYDYYKGQMEAWDGPALLLFSDGKTVGACLDRNGLRPARYWRTSDNFVYVASEVGVVPVDEAKVTMKGRLGPGMMIAVDLVNGQVYENTEVKKRISSFNPYGKWIKENSRFLKPVNFKSSTVMENEEILRSQQAFGYSSEDVQMVIESMASQGKEPTFCMGDDIPLAGLSQRPHMLYDYFKQRFAQVTNPAIDPLREGLVMSLEVNIGKRGNILELGPENASQVILSNPVLNEGALEELMKDQYLKPKVLSTYFDIRKGVEGSLQKALYYLCEAADDAVRSGSQLLVLSDRSDRLEPTRPSIPIMLAVGAVHQHLIQNGLRMSASIVADTAQCFSTHHFACLVGYGASAVCPYLALETCRQWRLSNKTVAFMRNGKIPTVTIEQAQKNYTKAVNAGLLKILSKMGISLLSSYCGAQIFEIYGLGQDVVDLAFTGSVSKISGLTFDELARETLSFWVKAFSEDTTKRLENFGFIQFRPGGEYHSNNPEMSKLLHKAVREKSETAYAVYQQHLSNRPVNVLRDLLEFKSDRAPIPVGKVEPAVAIVQRFCTGGMSLGAISRETHEAIAIAMNRIGGKSNSGEGGEDPIRWKPLTDVVDGYSPTLPHLKGLQNGDIATSAIKQVASGRFGVTPTFLVNADQLEIKVAQGAKPGEGGQLPGKKVSAYIARLRSSKPGVPLISPPPHHDIYSIEDLAQLIFDLHQINPNAKVSVKLVAEAGIGTVASGVAKGNADIIQISGHDGGTGASPISSIKHAGGPWELGLTETHQTLIANGLRERVILRVDGGLKSGVDVLMAAAMGADEYGFGSLAMIATGCVMARICHTNNCPVGVASQREELRARFPGVPGDLVNYFLYVAEEVRGILAQLGYNSLDDIIGRTELLRPRDISLVKTQHLDLSYLLSSVGTPSLSSTEIRKQEVHTNGPVLDDDILADPLVIDAIENEKVVEKTVKICNVDRAACGRVAGVIAKKYGDTGFAGQVNLTFLGSAGQSFGCFLIPGMNIRLIGESNDYVGKGMAGGEIVVTPVEKIGFVPEEATIVGNTCLYGATGGQIFARGKAGERFAVRNSLAEAVVEGTGDHCCEYMTGGCVVVLGKVGRNVAAGMTGGLAYLLDEDDTLLPKINREIVKIQRVTAPAGELQLKSLIEAHVEKTGSSKGATILNEWEKYLPLFWQLVPPSEEDTPEASAAYVRTSTGEVTFQSA.

The N-terminal 105 residues, 1–105, are a transit peptide targeting the chloroplast and mitochondrion; the sequence is MAMQSLSPVP…LEDILSERGA (105 aa). Cys106 (for GATase activity) is an active-site residue. In terms of domain architecture, Glutamine amidotransferase type-2 spans 106 to 505; sequence CGVGFIANLD…PGMMIAVDLV (400 aa). 1184 to 1241 lines the FMN pocket; that stretch reads LTETHQTLIANGLRERVILRVDGGLKSGVDVLMAAAMGADEYGFGSLAMIATGCVMAR. [3Fe-4S] cluster-binding residues include Cys1237, Cys1243, and Cys1248.

The protein belongs to the glutamate synthase family. Interacts with SHM1. [3Fe-4S] cluster is required as a cofactor. Requires FAD as cofactor. FMN serves as cofactor. Highly expressed in leaves. High expression in the leaf mesophyll and phloem companion cell-sieve element complex.

The protein localises to the plastid. The protein resides in the chloroplast stroma. It is found in the mitochondrion matrix. The catalysed reaction is 2 oxidized [2Fe-2S]-[ferredoxin] + 2 L-glutamate = L-glutamine + 2 reduced [2Fe-2S]-[ferredoxin] + 2-oxoglutarate + 2 H(+). The protein operates within amino-acid biosynthesis; L-glutamate biosynthesis via GLT pathway; L-glutamate from 2-oxoglutarate and L-glutamine (ferredoxin route): step 1/1. It functions in the pathway energy metabolism; nitrogen metabolism. In terms of biological role, involved in glutamate biosynthesis in leaf. Required for the reassimilation of ammonium ions generated during photorespiration. The polypeptide is Ferredoxin-dependent glutamate synthase 1, chloroplastic/mitochondrial (Arabidopsis thaliana (Mouse-ear cress)).